A 400-amino-acid chain; its full sequence is Subtilisin-like protease 7 (400 aa).

The signal sequence occupies residues 1-20 (MGFITKAIPLALAAMSVVNG). A propeptide spanning residues 21-119 (AEILETRAGV…IERDARVQIN (99 aa)) is cleaved from the precursor. The Inhibitor I9 domain occupies 36–118 (KYIVIMNDGV…YIERDARVQI (83 aa)). Residues 129–400 (SWGLARVGSR…GKLINNGSGK (272 aa)) enclose the Peptidase S8 domain. Residues D161 and H192 each act as charge relay system in the active site. 2 N-linked (GlcNAc...) asparagine glycosylation sites follow: N222 and N252. Catalysis depends on S346, which acts as the Charge relay system. A glycan (N-linked (GlcNAc...) asparagine) is linked at N396.

It belongs to the peptidase S8 family.

It localises to the secreted. Functionally, secreted subtilisin-like serine protease with keratinolytic activity that contributes to pathogenicity. This chain is Subtilisin-like protease 7 (SUB7), found in Arthroderma otae (strain ATCC MYA-4605 / CBS 113480) (Microsporum canis).